Reading from the N-terminus, the 251-residue chain is Hydroxyacylglutathione hydrolase (251 aa).

Residues His53, His55, Asp57, His58, His110, Asp127, and His165 each coordinate Zn(2+).

The protein belongs to the metallo-beta-lactamase superfamily. Glyoxalase II family. As to quaternary structure, monomer. Zn(2+) serves as cofactor.

The enzyme catalyses an S-(2-hydroxyacyl)glutathione + H2O = a 2-hydroxy carboxylate + glutathione + H(+). The protein operates within secondary metabolite metabolism; methylglyoxal degradation; (R)-lactate from methylglyoxal: step 2/2. Functionally, thiolesterase that catalyzes the hydrolysis of S-D-lactoyl-glutathione to form glutathione and D-lactic acid. The protein is Hydroxyacylglutathione hydrolase of Salmonella arizonae (strain ATCC BAA-731 / CDC346-86 / RSK2980).